Reading from the N-terminus, the 428-residue chain is D-amino acid dehydrogenase (428 aa).

3-17 (VVILGSGVVGVASAY) serves as a coordination point for FAD.

The protein belongs to the DadA oxidoreductase family. Requires FAD as cofactor.

The enzyme catalyses a D-alpha-amino acid + A + H2O = a 2-oxocarboxylate + AH2 + NH4(+). It participates in amino-acid degradation; D-alanine degradation; NH(3) and pyruvate from D-alanine: step 1/1. Its function is as follows. Oxidative deamination of D-amino acids. The chain is D-amino acid dehydrogenase from Burkholderia vietnamiensis (strain G4 / LMG 22486) (Burkholderia cepacia (strain R1808)).